The following is a 31-amino-acid chain: Cytochrome b6-f complex subunit 6 (31 aa).

A helical membrane pass occupies residues 3-23 (AIVAYIGFLALFTGIAAGLLF).

Belongs to the PetL family. As to quaternary structure, the 4 large subunits of the cytochrome b6-f complex are cytochrome b6, subunit IV (17 kDa polypeptide, PetD), cytochrome f and the Rieske protein, while the 4 small subunits are PetG, PetL, PetM and PetN. The complex functions as a dimer.

The protein localises to the cellular thylakoid membrane. Its function is as follows. Component of the cytochrome b6-f complex, which mediates electron transfer between photosystem II (PSII) and photosystem I (PSI), cyclic electron flow around PSI, and state transitions. PetL is important for photoautotrophic growth as well as for electron transfer efficiency and stability of the cytochrome b6-f complex. The chain is Cytochrome b6-f complex subunit 6 from Nostoc sp. (strain PCC 7120 / SAG 25.82 / UTEX 2576).